We begin with the raw amino-acid sequence, 248 residues long: tRNA1(Val) (adenine(37)-N6)-methyltransferase (248 aa).

Belongs to the methyltransferase superfamily. tRNA (adenine-N(6)-)-methyltransferase family.

It localises to the cytoplasm. The enzyme catalyses adenosine(37) in tRNA1(Val) + S-adenosyl-L-methionine = N(6)-methyladenosine(37) in tRNA1(Val) + S-adenosyl-L-homocysteine + H(+). In terms of biological role, specifically methylates the adenine in position 37 of tRNA(1)(Val) (anticodon cmo5UAC). The chain is tRNA1(Val) (adenine(37)-N6)-methyltransferase from Pectobacterium carotovorum subsp. carotovorum (strain PC1).